A 490-amino-acid chain; its full sequence is MGKKRKLDSKSPAAARSAAARAAAAAAAAAAAAAVAEPSSQPEALAEDPAPSSQPLGLSSEGAGERMMSREAGGGEEEEVEEVEVEEEVEVDEDEDGEGEGEEEEEAAERDADSIQALLNSFPKDQLVELLSAAALSHEDVLTAVHRAADADPALRKIFVHGLGWDATAETLTEAFSAYGEIEDLRVVTDRATGKCKGYGFILFSRRSGARAALREPQKKIGNRTTACQLASVGPVPPGGMATNPAPAVAPAPAQLALPPVSEYTQRKIFVSNVGADIDPQKLLQFFSKYGEIEEGPLGLDKVTGKPKGFALFVYKTLDSAKKALQEPHKQFEGVVLHCQKAIDGPKPNKGGGLGGLYGAGTSGGRKGAGGYGAHSHSLPGAAVGGHVMPSPVSSLTSLPGVAGGPGVNPALGQALTAILASQGGGLGLNNILGVGANGSGLPNPGASAGLGSSGLPGMPGAGGYLGGYGGGGGYGSTPPGGPGRNYMGH.

Positions M1–A112 are disordered. A compositionally biased stretch (low complexity) spans A13–A36. Acidic residues predominate over residues G74 to A108. 2 RRM domains span residues R156–V233 and R267–I343.

In terms of assembly, forms homodimers. Interacts with RBP-L and RBP-208. Interacts with NSF.

It is found in the nucleus. Its subcellular location is the cytoplasm. In terms of biological role, RNA-binding protein that binds to a cis-localization element or zipcode, within the 5'-CDS of prolamine RNA. Binds strongly to glutelin mRNA, particularly to 3'-UTR and zipcode RNA. Recognizes and binds to glutelin zipcode RNA, which is required for proper mRNA localization to cisternal endoplasmic reticulum. Exhibits strong binding activity to a glutelin intron sequence and may participate in mRNA splicing. Required for the correct localization of glutelin and prolamine mRNA in endosperm cells during grain development. RBP-P and RBP-L form a quaternary complex with the membrane trafficking factors NSF and RAB5A. This quaternay complex carries glutelin mRNAs for active transport on endosomes to the cortical endoplasmic reticulum membrane, and enables endosome-mediated glutelin mRNA transport in endosperm cells. The protein is RNA-binding protein P of Oryza sativa subsp. japonica (Rice).